We begin with the raw amino-acid sequence, 121 residues long: Huntingtin-interacting protein K (121 aa).

Residues 1 to 13 show a composition bias toward acidic residues; the sequence is MATEGDVELELET. The tract at residues 1 to 75 is disordered; that stretch reads MATEGDVELE…EQKAKQEREK (75 aa). Basic and acidic residues-rich tracts occupy residues 20 to 47 and 60 to 75; these read RPPEKPRKHDSGAADLERVTDYAEEKEI and GDRRSREQKAKQEREK. S30 bears the Phosphoserine mark. Residues 52 to 121 are required for association with the NAA10-NAA15 complex; the sequence is LETAMSVIGD…VVEALIALTN (70 aa). The stretch at 62 to 107 forms a coiled coil; that stretch reads RRSREQKAKQEREKELAKVTIKKEDLELIMTEMEISRAAAERSLRE.

In terms of assembly, component of the N-terminal acetyltransferase A (NatA)/HYPK complex at least composed of NAA10, NAA15 and HYPK, which has N-terminal acetyltransferase activity. Within the complex interacts with NAA10. Within the complex interacts with NAA15. Predominantly interacts with NAA15 in the NAA10-NAA15 complex (also called the NatA complex); the interaction with the NatA complex reduces the acetylation activity of the NatA complex. Interacts with HTT (via N-terminus). The NatA complex is required for HYPK stability and for reducing polyQ aggregation of HTT. Component of the N-terminal acetyltransferase E (NatE)/HYPK complex at least composed of NAA10, NAA15, NAA50 and HYPK. Within the complex interacts with NAA10 and NAA15. Does not interact with NAA50. Interaction with NAA15 reduces the capacity of NAA15 to interact with NAA50. Its capacity to interact with the NatA complex is reduced by NAA50. Does not interact with the N-terminal acetyltransferase B (NatB) complex component NAA25 or the N-terminal acetyltransferase C (NatC) complex component NAA35.

The protein localises to the nucleus. The protein resides in the cytoplasm. Component of several N-terminal acetyltransferase complexes. Inhibits the N-terminal acetylation activity of the N-terminal acetyltransferase NAA10-NAA15 complex (also called the NatA complex). Has chaperone-like activity preventing polyglutamine (polyQ) aggregation of HTT in neuronal cells probably while associated with the NatA complex. May play a role in the NatA complex-mediated N-terminal acetylation of PCNP. The protein is Huntingtin-interacting protein K of Homo sapiens (Human).